Reading from the N-terminus, the 561-residue chain is Formate--tetrahydrofolate ligase (561 aa).

Threonine 66–threonine 73 is a binding site for ATP.

Belongs to the formate--tetrahydrofolate ligase family.

The enzyme catalyses (6S)-5,6,7,8-tetrahydrofolate + formate + ATP = (6R)-10-formyltetrahydrofolate + ADP + phosphate. Its pathway is one-carbon metabolism; tetrahydrofolate interconversion. The sequence is that of Formate--tetrahydrofolate ligase from Methylibium petroleiphilum (strain ATCC BAA-1232 / LMG 22953 / PM1).